The following is a 387-amino-acid chain: Queuine tRNA-ribosyltransferase (387 aa).

The active-site Proton acceptor is the aspartate 102. Residues 102–106 (DSGGF), aspartate 156, glutamine 205, and glycine 232 each bind substrate. The interval 263–269 (GVGTPED) is RNA binding. The active-site Nucleophile is the aspartate 282. The interval 287–291 (TRNAR) is RNA binding; important for wobble base 34 recognition. Zn(2+) contacts are provided by cysteine 320, cysteine 322, cysteine 325, and histidine 351.

It belongs to the queuine tRNA-ribosyltransferase family. Homodimer. Within each dimer, one monomer is responsible for RNA recognition and catalysis, while the other monomer binds to the replacement base PreQ1. Zn(2+) is required as a cofactor.

The enzyme catalyses 7-aminomethyl-7-carbaguanine + guanosine(34) in tRNA = 7-aminomethyl-7-carbaguanosine(34) in tRNA + guanine. The protein operates within tRNA modification; tRNA-queuosine biosynthesis. Functionally, catalyzes the base-exchange of a guanine (G) residue with the queuine precursor 7-aminomethyl-7-deazaguanine (PreQ1) at position 34 (anticodon wobble position) in tRNAs with GU(N) anticodons (tRNA-Asp, -Asn, -His and -Tyr). Catalysis occurs through a double-displacement mechanism. The nucleophile active site attacks the C1' of nucleotide 34 to detach the guanine base from the RNA, forming a covalent enzyme-RNA intermediate. The proton acceptor active site deprotonates the incoming PreQ1, allowing a nucleophilic attack on the C1' of the ribose to form the product. After dissociation, two additional enzymatic reactions on the tRNA convert PreQ1 to queuine (Q), resulting in the hypermodified nucleoside queuosine (7-(((4,5-cis-dihydroxy-2-cyclopenten-1-yl)amino)methyl)-7-deazaguanosine). This is Queuine tRNA-ribosyltransferase from Polaromonas naphthalenivorans (strain CJ2).